Consider the following 190-residue polypeptide: Ribosome maturation factor RimM (190 aa).

A PRC barrel domain is found at 95–171 (DPDEFYDHEL…VVMIEPPEGL (77 aa)). The segment at 169 to 190 (EGLLDPDFGDKSNSDNSNSDND) is disordered.

It belongs to the RimM family. As to quaternary structure, binds ribosomal protein uS19.

Its subcellular location is the cytoplasm. An accessory protein needed during the final step in the assembly of 30S ribosomal subunit, possibly for assembly of the head region. Essential for efficient processing of 16S rRNA. May be needed both before and after RbfA during the maturation of 16S rRNA. It has affinity for free ribosomal 30S subunits but not for 70S ribosomes. This Rhodococcus erythropolis (strain PR4 / NBRC 100887) protein is Ribosome maturation factor RimM.